Here is a 174-residue protein sequence, read N- to C-terminus: Interferon gamma (174 aa).

Residues 1–23 form the signal peptide; the sequence is MNSTRCILALLLCLTQAMSGCYG. At Gln-24 the chain carries Pyrrolidone carboxylic acid. N-linked (GlcNAc...) asparagine glycosylation is found at Asn-39 and Asn-106.

This sequence belongs to the type II (or gamma) interferon family. As to quaternary structure, homodimer. Interacts with IFNGR1 (via extracellular domain); this interaction promotes IFNGR1 dimerization. In terms of tissue distribution, released primarily from activated T lymphocytes.

Its subcellular location is the secreted. Its function is as follows. Type II interferon produced by immune cells such as T-cells and NK cells that plays crucial roles in antimicrobial, antiviral, and antitumor responses by activating effector immune cells and enhancing antigen presentation. Primarily signals through the JAK-STAT pathway after interaction with its receptor IFNGR1 to affect gene regulation. Upon IFNG binding, IFNGR1 intracellular domain opens out to allow association of downstream signaling components JAK2, JAK1 and STAT1, leading to STAT1 activation, nuclear translocation and transcription of IFNG-regulated genes. Many of the induced genes are transcription factors such as IRF1 that are able to further drive regulation of a next wave of transcription. Plays a role in class I antigen presentation pathway by inducing a replacement of catalytic proteasome subunits with immunoproteasome subunits. In turn, increases the quantity, quality, and repertoire of peptides for class I MHC loading. Increases the efficiency of peptide generation also by inducing the expression of activator PA28 that associates with the proteasome and alters its proteolytic cleavage preference. Up-regulates as well MHC II complexes on the cell surface by promoting expression of several key molecules such as cathepsins B/CTSB, H/CTSH, and L/CTSL. Participates in the regulation of hematopoietic stem cells during development and under homeostatic conditions by affecting their development, quiescence, and differentiation. The chain is Interferon gamma (IFNG) from Phodopus sungorus (Striped hairy-footed hamster).